The sequence spans 534 residues: MRLITRWIPLANALASTMPVQVVASIENPSLLPTPPMGFNNWARFMCDLNETLFVETTDAMASNGLLEAGYNRINLDDCWMNYDRAENGSLEWNVTKFPRGLPWLGQYVKSKGFNFGIYEDSGNLTCGGYPGSEGYEEIDAEIFAAWGIDYLKLDGCNVYPKEGRTLQEEYKYLYGNWHEILSKMQQPLIFSESAPAYFSMTDNLTDWHTVMDWVPEYGELARHSVDILVYSGEGSAWDSIMTNYKFNTLVARYQRPGYYNDPDFLIADHPGLSLDEKRSQFALWASFSAPLIISAHIPDLSSEDLEYLTNQALIAVDQDPLAQQATLASRDGSLDVLTRNLADGSRLVTILNHGSESIETDISLDILGLSTDCTYKAQDLWGGSTQTIKDAIRIKLNTHATAVYKIDTDEKCSQVIPTGLIFNTASGKCLTGTSSSVGSESCNGSKSQIWQIDASGVIRTLSEQSKCLTADGKAISLQECSENNGQKWSYAITGNLKNADTGYCLTNGGGVSACGFETNSQVFGLPAGVHVAL.

Residues 1 to 25 (MRLITRWIPLANALASTMPVQVVAS) form the signal peptide. Residues Cys-47 and Cys-79 are joined by a disulfide bond. Asn-50, Asn-88, Asn-94, and Asn-124 each carry an N-linked (GlcNAc...) asparagine glycan. Cys-127 and Cys-157 are oxidised to a cystine. Catalysis depends on Asp-155, which acts as the Nucleophile. A glycan (N-linked (GlcNAc...) asparagine) is linked at Asn-204. The Proton donor role is filled by Asp-213. One can recognise a Ricin B-type lectin domain in the interval 413 to 534 (CSQVIPTGLI…GLPAGVHVAL (122 aa)). Cysteines 430 and 443 form a disulfide. Asn-444 carries N-linked (GlcNAc...) asparagine glycosylation. Residues Cys-468 and Cys-481 are joined by a disulfide bond.

Belongs to the glycosyl hydrolase 27 family.

The protein resides in the secreted. It carries out the reaction Hydrolysis of terminal, non-reducing alpha-D-galactose residues in alpha-D-galactosides, including galactose oligosaccharides, galactomannans and galactolipids.. Functionally, hydrolyzes a variety of simple alpha-D-galactoside as well as more complex molecules such as oligosaccharides and polysaccharides. This chain is Probable alpha-galactosidase A (aglA), found in Aspergillus oryzae (strain ATCC 42149 / RIB 40) (Yellow koji mold).